Reading from the N-terminus, the 210-residue chain is Large ribosomal subunit protein bL25 (210 aa).

Residues 175–210 are disordered; that stretch reads IATILPPQQEEEIDSGEQQEAGQPDAAEGRETTPEE. Residues 201 to 210 are compositionally biased toward basic and acidic residues; that stretch reads AEGRETTPEE.

This sequence belongs to the bacterial ribosomal protein bL25 family. CTC subfamily. In terms of assembly, part of the 50S ribosomal subunit; part of the 5S rRNA/L5/L18/L25 subcomplex. Contacts the 5S rRNA. Binds to the 5S rRNA independently of L5 and L18.

This is one of the proteins that binds to the 5S RNA in the ribosome where it forms part of the central protuberance. This chain is Large ribosomal subunit protein bL25, found in Geobacillus kaustophilus (strain HTA426).